The following is a 327-amino-acid chain: Polyprenyl transferase andD (327 aa).

8 consecutive transmembrane segments (helical) span residues 49–69, 81–101, 140–160, 174–194, 201–221, 244–264, 271–291, and 307–327; these read LGYI…ASIA, ITLL…WDDI, FAFV…MLFF, PQLI…GLNL, IPMA…DIIY, CLDA…VIAG, APFF…LAMA, and CCTS…VWRS.

It belongs to the UbiA prenyltransferase family. Mg(2+) is required as a cofactor.

It localises to the membrane. The protein operates within secondary metabolite biosynthesis; terpenoid biosynthesis. Polyprenyl transferase; part of the gene cluster that mediates the biosynthesis of anditomin, a fungal meroterpenoid. The first step of the pathway is the synthesis of 3,5-dimethylorsellinic acid (DMOA) by the polyketide synthase andM. DMOA is then converted to the phthalide compound 5,7-dihydroxy-4,6-dimethylphthalide (DHDMP) by the cytochrome P450 monooxygenase andK, which is further prenylated by the prenyltransferase andD to yield farnesyl-DHDMP. Further epoxidation by the FAD-dependent monooxygenase andE leads to epoxyfarnesyl-DHDMP. The next step involves the terpene cyclase andB that converts epoxyfarnesyl-DHDMP into preandiloid A through opening of the epoxide ring followed by the cyclization of the farnesyl moiety. Preandiloid A is in turn oxidized at the C-3 hydroxyl group to yield preandiloid B by the dehydrogenase andC. The dioxygenase andA is solely responsible for the dehydrogenation of preandiloid B leading to the enone preandiloid C, as well as for the intriguing structural rearrangement to generate the bicyclo[2.2.2]octane core, transforming preandiloid C into andiconin. FAD-binding monooxygenase andJ then produces andilesin D which is reduced by dehydrogenase andI to yield andilesin A. Action of acetyltransferase andG followed by a spontaneous acetate elimination leads then to andilesin B, which is in turn substrate of the short chain dehydrogenase andH to yield andilesin C. Finally, the dioxygenase andF catalyzes the transformation of andilesin C to anditomin. This is Polyprenyl transferase andD from Emericella variicolor (Aspergillus stellatus).